The primary structure comprises 365 residues: DNA replication and repair protein RecF (365 aa).

An ATP-binding site is contributed by 23 to 30; that stretch reads GPNGIGKS.

This sequence belongs to the RecF family.

The protein resides in the cytoplasm. In terms of biological role, the RecF protein is involved in DNA metabolism; it is required for DNA replication and normal SOS inducibility. RecF binds preferentially to single-stranded, linear DNA. It also seems to bind ATP. This chain is DNA replication and repair protein RecF, found in Parasynechococcus marenigrum (strain WH8102).